The primary structure comprises 701 residues: Elongation factor G (701 aa).

A tr-type G domain is found at 8 to 291 (SRYRNIGIVA…AVIDYLPAPI (284 aa)). Residues 17–24 (AHVDAGKT), 89–93 (DTPGH), and 143–146 (NKMD) each bind GTP.

This sequence belongs to the TRAFAC class translation factor GTPase superfamily. Classic translation factor GTPase family. EF-G/EF-2 subfamily.

The protein localises to the cytoplasm. Functionally, catalyzes the GTP-dependent ribosomal translocation step during translation elongation. During this step, the ribosome changes from the pre-translocational (PRE) to the post-translocational (POST) state as the newly formed A-site-bound peptidyl-tRNA and P-site-bound deacylated tRNA move to the P and E sites, respectively. Catalyzes the coordinated movement of the two tRNA molecules, the mRNA and conformational changes in the ribosome. The sequence is that of Elongation factor G from Pseudomonas syringae pv. tomato (strain ATCC BAA-871 / DC3000).